We begin with the raw amino-acid sequence, 194 residues long: 3-isopropylmalate dehydratase small subunit (194 aa).

It belongs to the LeuD family. LeuD type 1 subfamily. As to quaternary structure, heterodimer of LeuC and LeuD.

The catalysed reaction is (2R,3S)-3-isopropylmalate = (2S)-2-isopropylmalate. Its pathway is amino-acid biosynthesis; L-leucine biosynthesis; L-leucine from 3-methyl-2-oxobutanoate: step 2/4. Its function is as follows. Catalyzes the isomerization between 2-isopropylmalate and 3-isopropylmalate, via the formation of 2-isopropylmaleate. The sequence is that of 3-isopropylmalate dehydratase small subunit from Bacillus cereus (strain ATCC 14579 / DSM 31 / CCUG 7414 / JCM 2152 / NBRC 15305 / NCIMB 9373 / NCTC 2599 / NRRL B-3711).